Reading from the N-terminus, the 1334-residue chain is WASH complex subunit 2 (1334 aa).

A sufficient for interaction with WASHC3, WASHC4 and WASHC5; required for interaction with WASHC1 region spans residues 1–219 (MNRTSPDSER…VGSDRGSIVD (219 aa)). 5 positions are modified to phosphoserine: Ser157, Ser159, Ser204, Ser205, and Ser209. Residues 201 to 213 (GELSSEEGSVGSD) show a composition bias toward low complexity. Residues 201–471 (GELSSEEGSV…SKPSKTDKVK (271 aa)) form a disordered region. Acidic residues-rich tracts occupy residues 219 to 232 (DSED…SDED) and 249 to 274 (SDEE…EDIE). The residue at position 284 (Ser284) is a Phosphoserine. Basic and acidic residues predominate over residues 289 to 324 (LAARIKGDISNQRKEGQTDGKPQKTVKEKKERRTPA). Thr322 is modified (phosphothreonine). The tract at residues 347 to 594 (SRGGLFSNGQ…QTSSLQPQSQ (248 aa)) is sufficient for interaction with CCDC93. The interaction with VPS35 stretch occupies residues 348–1334 (RGGLFSNGQG…DDPLNAFGSQ (987 aa)). Positions 358–368 (LFDDEDESDLF) match the LFa 1 motif. Ser388 bears the Phosphoserine mark. 2 consecutive short sequence motifs (LFa) follow at residues 441 to 457 (LFDD…NNFF) and 476 to 485 (IFDDDEGDLF). The span at 442–454 (FDDDDNDNDEDDN) shows a compositional bias: acidic residues. The interval 492–650 (LPAASVSQTH…DSGATQGQEA (159 aa)) is disordered. The segment covering 513–530 (LPSSKNLKLVSETKTQKG) has biased composition (polar residues). 2 consecutive short sequence motifs (LFa) follow at residues 531–542 (LFSDEEDSEDLF) and 566–577 (LFGDEDEEDSLF). 2 positions are modified to phosphoserine: Ser533 and Ser538. Low complexity predominate over residues 541 to 561 (LFSSQSSSKPKSASLPSSQPP). 2 stretches are compositionally biased toward polar residues: residues 584-594 (KQTSSLQPQSQ) and 601-611 (EQPSKKTSALL). Phosphoserine occurs at positions 613 and 614. Basic and acidic residues predominate over residues 625 to 639 (SHTKLASDNKSKGEL). Short sequence motifs (LFa) lie at residues 658–670 (LFED…VDLF) and 686–698 (LFED…SSLF). The interval 691–837 (AESGSSLFGL…SRPKSTGVFQ (147 aa)) is disordered. Phosphoserine is present on residues Ser723, Ser747, Ser752, Ser783, and Ser798. Positions 800 to 811 (FDEDEDKVEDES) are enriched in acidic residues. The segment covering 818 to 830 (DGREKGLKTDSRP) has biased composition (basic and acidic residues). 2 consecutive short sequence motifs (LFa) follow at residues 835 to 843 (VFQDEELLF) and 852 to 858 (DPDVDLF). Disordered regions lie at residues 862-948 (KKIR…PSSR) and 1014-1225 (AQAD…SKTH). Residues Ser870 and Ser873 each carry the phosphoserine modification. The LFa 10 motif lies at 874–884 (LFGDDEDDDLF). A compositionally biased stretch (basic and acidic residues) spans 894-906 (PEKKGTLKKDHPV). The segment covering 908 to 919 (LKNQDPLDSTQG) has biased composition (polar residues). The tract at residues 932 to 1334 (QDSSGLTPFK…DDPLNAFGSQ (403 aa)) is interaction with phospholipids. A compositionally biased stretch (basic residues) spans 1023-1041 (NKSRVKVRGKRRPQTRAAR). Positions 1024 to 1042 (KSRVKVRGKRRPQTRAARR) are required for interaction with F-actin-capping protein subunit alpha (CAPZA1 or CAPZA2 or CAPZA3). 4 positions are modified to phosphoserine: Ser1049, Ser1067, Ser1084, and Ser1109. Short sequence motifs (LFa) lie at residues 1124–1131 (LFDSGDIF), 1164–1178 (AFPD…EDLF), and 1194–1202 (LLEDEEDLF). Phosphoserine occurs at positions 1169, 1172, and 1173. A compositionally biased stretch (basic and acidic residues) spans 1203 to 1225 (ADPRGKKNERKPDSHQDSVSKTH). 3 short sequence motifs (LFa) span residues 1227-1233 (IFEDDIF), 1255-1263 (LFDDNIDIF), and 1283-1292 (MFDDDTDDIF). Residues 1294–1334 (SGLQAKASKPKSQSAEAASEQRSEHKVASIFDDPLNAFGSQ) are disordered. Residues 1297 to 1311 (QAKASKPKSQSAEAA) are compositionally biased toward low complexity. The short motif at 1323–1331 (IFDDPLNAF) is the LFa 17 element. Residue Ser1333 is modified to Phosphoserine.

The protein belongs to the FAM21 family. As to quaternary structure, component of the WASH core complex also described as WASH regulatory complex (SHRC) composed of WASHC1, WASHC2, WASHC3, WASHC4 and WASHC5; in the complex interacts (via N-terminus) directly with WASHC1. The WASH core complex associates with the F-actin-capping protein dimer (formed by CAPZA1, CAPZA2 or CAPZA3 and CAPZB) in a transient or substoichiometric manner which was initially described as WASH complex. Interacts with VPS35; mediates the association with the retromer CSC complex. Interacts with FKBP15. Interacts with CCDC93, CCDC22, VPS35L; indicative for an association of the WASH core complex with the CCC and retriever complexes. Directly interacts with TBC1D23.

It localises to the early endosome membrane. The protein resides in the cell membrane. Functionally, acts as a component of the WASH core complex that functions as a nucleation-promoting factor (NPF) at the surface of endosomes, where it recruits and activates the Arp2/3 complex to induce actin polymerization, playing a key role in the fission of tubules that serve as transport intermediates during endosome sorting. Mediates the recruitment of the WASH core complex to endosome membranes via binding to phospholipids and VPS35 of the retromer CSC. Mediates the recruitment of the F-actin-capping protein dimer to the WASH core complex probably promoting localized F-actin polymerization needed for vesicle scission. Via its C-terminus binds various phospholipids, most strongly phosphatidylinositol 4-phosphate (PtdIns-(4)P), phosphatidylinositol 5-phosphate (PtdIns-(5)P) and phosphatidylinositol 3,5-bisphosphate (PtdIns-(3,5)P2). Involved in the endosome-to-plasma membrane trafficking and recycling of SNX27-retromer-dependent cargo proteins, such as GLUT1. Required for the association of DNAJC13, ENTR1, ANKRD50 with retromer CSC subunit VPS35. Required for the endosomal recruitment of CCC and retriever complexes subunits COMMD1 and CCDC93 as well as the retrievere complex subunit VPS35L. The sequence is that of WASH complex subunit 2 from Mus musculus (Mouse).